A 1083-amino-acid chain; its full sequence is DNA primase (1083 aa).

The segment at C1022–C1061 adopts a CHC2-type zinc-finger fold.

The protein belongs to the herpesviridae DNA primase family. Associates with the helicase and the primase-associated factor to form the helicase-primase factor.

It is found in the host nucleus. Essential component of the helicase/primase complex. Unwinds the DNA at the replication forks and generates single-stranded DNA for both leading and lagging strand synthesis. The primase initiates primer synthesis and thereby produces large amount of short RNA primers on the lagging strand that the polymerase elongates using dNTPs. In Homo sapiens (Human), this protein is DNA primase.